The primary structure comprises 869 residues: Retrovirus-related Pol polyprotein from type-1 retrotransposable element R2 (869 aa).

A Reverse transcriptase domain is found at 199 to 475 (IFVFYGRVPS…DLWKYLGVVY (277 aa)). The segment at 601 to 869 (LYASISHSCK…FNNVTTVVHW (269 aa)) is nucleic acid-binding endonuclease.

The enzyme catalyses DNA(n) + a 2'-deoxyribonucleoside 5'-triphosphate = DNA(n+1) + diphosphate. This is Retrovirus-related Pol polyprotein from type-1 retrotransposable element R2 from Bradysia coprophila (Dark-winged fungus gnat).